The chain runs to 379 residues: Transcription factor bHLH122 (379 aa).

Residues 1-17 (MESEFQQHHFLLHDHQH) are compositionally biased toward basic and acidic residues. The interval 1–21 (MESEFQQHHFLLHDHQHQRPR) is disordered. S74 carries the phosphoserine modification. Disordered stretches follow at residues 79–98 (TFNS…EDED), 133–156 (SVSR…ARHN), and 190–286 (TSNT…MSLP). The span at 84-93 (GTEKKPPEVK) shows a compositional bias: basic and acidic residues. Residues 190 to 200 (TSNTEASSLTP) are compositionally biased toward polar residues. Phosphoserine is present on residues S213 and S234. Residues 235–261 (GGFNRSFGNEGSASSKLTALARTQSGG) are compositionally biased toward polar residues. The span at 265 to 274 (YKTKDEDSAS) shows a compositional bias: basic and acidic residues. Positions 310-360 (CATHPRSIAERVRRTKISERMRKLQDLVPNMDTQTNTADMLDLAVQYIKDL) constitute a bHLH domain.

As to quaternary structure, homodimer.

It is found in the nucleus. The chain is Transcription factor bHLH122 (BHLH122) from Arabidopsis thaliana (Mouse-ear cress).